Consider the following 426-residue polypeptide: Mothers against decapentaplegic homolog 7 (426 aa).

A disordered region spans residues 14–40 (WRSRAPGGEDEEEGVGGGGGGGGLRGE). Gly residues predominate over residues 28–39 (VGGGGGGGGLRG). An N6-acetyllysine; alternate mark is found at K64 and K70. Glycyl lysine isopeptide (Lys-Gly) (interchain with G-Cter in ubiquitin); alternate cross-links involve residues K64 and K70. The MH1 domain maps to 64–207 (KAVRGAKGHH…LSRLCELESP (144 aa)). Positions 67-76 (RGAKGHHHPH) are enriched in basic residues. The interval 67 to 88 (RGAKGHHHPHPPSSGAGAAGGA) is disordered. Zn(2+)-binding residues include C125, C180, C192, and H197. Positions 208–211 (PPPY) match the PY-motif motif. Positions 208-217 (PPPYSRYPMD) are important for interaction with SMURF2. S249 bears the Phosphoserine mark. In terms of domain architecture, MH2 spans 261–426 (WCVVAYWEEK…CWLEVIFNSR (166 aa)).

The protein belongs to the dwarfin/SMAD family. In terms of assembly, interacts with COPS5. Interacts with STAMBP. Interacts with NEDD4L. Interacts with RNF111, AXIN1 and AXIN2. Interacts with PPP1R15A. Interacts with ACVR1B, SMURF1, SMURF2 and TGFBR1; SMAD7 recruits SMURF1 and SMURF2 to the TGF-beta receptor and regulates its degradation. Interacts with WWP1. Interacts with PDPK1 (via PH domain). Interacts with TSC22D1/TSC-22; the interaction requires TGF-beta and the interaction is inhibited by TGFBR1. In terms of processing, phosphorylation on Ser-249 does not affect its stability, nuclear localization or inhibitory function in TGFB signaling; however it affects its ability to regulate transcription. Phosphorylated by PDPK1. Ubiquitinated by WWP1. Polyubiquitinated by RNF111, which is enhanced by AXIN1 and promotes proteasomal degradation. In response to TGF-beta, ubiquitinated by SMURF1; which promotes its degradation. Post-translationally, acetylation prevents ubiquitination and degradation mediated by SMURF1. Ubiquitous.

It localises to the nucleus. It is found in the cytoplasm. Functionally, antagonist of signaling by TGF-beta (transforming growth factor) type 1 receptor superfamily members; has been shown to inhibit TGF-beta (Transforming growth factor) and activin signaling by associating with their receptors thus preventing SMAD2 access. Functions as an adapter to recruit SMURF2 to the TGF-beta receptor complex. Also acts by recruiting the PPP1R15A-PP1 complex to TGFBR1, which promotes its dephosphorylation. Positively regulates PDPK1 kinase activity by stimulating its dissociation from the 14-3-3 protein YWHAQ which acts as a negative regulator. In Rattus norvegicus (Rat), this protein is Mothers against decapentaplegic homolog 7 (Smad7).